Reading from the N-terminus, the 268-residue chain is Tryptophan synthase alpha chain (268 aa).

Catalysis depends on proton acceptor residues E49 and D60.

The protein belongs to the TrpA family. In terms of assembly, tetramer of two alpha and two beta chains.

The enzyme catalyses (1S,2R)-1-C-(indol-3-yl)glycerol 3-phosphate + L-serine = D-glyceraldehyde 3-phosphate + L-tryptophan + H2O. Its pathway is amino-acid biosynthesis; L-tryptophan biosynthesis; L-tryptophan from chorismate: step 5/5. In terms of biological role, the alpha subunit is responsible for the aldol cleavage of indoleglycerol phosphate to indole and glyceraldehyde 3-phosphate. This is Tryptophan synthase alpha chain from Haemophilus influenzae (strain 86-028NP).